A 210-amino-acid chain; its full sequence is Tumor protein D53 homolog (210 aa).

The stretch at 22-73 (VTDVDFTSMISEEEKEELKAELAKLEDEISTLRQVLAAKEKHLIEIKQKLGM) forms a coiled coil. A compositionally biased stretch (polar residues) spans 185–197 (SSTAHASAQSSLA). The tract at residues 185 to 210 (SSTAHASAQSSLAGTRLPESEEELQC) is disordered.

It belongs to the TPD52 family. In terms of assembly, forms a homodimer or heterodimer with other members of the family.

The sequence is that of Tumor protein D53 homolog (TPD52L1) from Gallus gallus (Chicken).